Here is a 330-residue protein sequence, read N- to C-terminus: MKNSQDTQVINLVADIGGTNIRLAITDKDNNINEIKTYQCKDFPHLSNVIYHYLKENGLLNSQVNACLAIACPVDTDSISMTNLPWKFSQKQLKEELKLHSLTLINDYTAIAMAIPLLSDKQKVKIGHGEAENKQPIAVCGPGTGLGVANLVNINNHWYCLGGEGGHTDFAPVDELDVKIFQQLKTTKKRLSYEQLLSGYGLEQIYQALVIINNQEATNAEQSKLSAKEISTQAIAGTCPICQQALSQFCKILGSFSGNLALTTGSFGGVYIAGGIVPRFIDYLKNSEFRARFETKGRMSHLNEQIPTYIITESQPGLLGAAAYLNQVFP.

14–19 (ADIGGT) contributes to the ATP binding site.

It belongs to the bacterial glucokinase family.

The protein localises to the cytoplasm. The enzyme catalyses D-glucose + ATP = D-glucose 6-phosphate + ADP + H(+). This Colwellia psychrerythraea (strain 34H / ATCC BAA-681) (Vibrio psychroerythus) protein is Glucokinase.